The sequence spans 807 residues: Putative AC transposase (807 aa).

Disordered stretches follow at residues 42–140 (GLKR…KKCT) and 785–807 (MDED…GSSP). The segment covering 84-98 (QSVSSSNANGTATDP) has biased composition (polar residues). Tandem repeats lie at residues 109–110 (PQ), 111–112 (PQ), 113–114 (PQ), 115–116 (PQ), 117–118 (PE), 119–120 (PQ), 121–122 (PQ), 123–124 (PQ), 125–126 (PE), and 127–128 (PE). The segment at 109-128 (PQPQPQPQPEPQPQPQPEPE) is 10 X 2 AA tandem repeats of P-[QE]. A compositionally biased stretch (pro residues) spans 110–125 (QPQPQPQPEPQPQPQP).

This Zea mays (Maize) protein is Putative AC transposase.